The chain runs to 94 residues: DASH complex subunit DAD5 (94 aa).

Positions 1 to 20 are enriched in low complexity; that stretch reads MRRSTIVPTSRTSSSSPSPS. Residues 1–25 form a disordered region; that stretch reads MRRSTIVPTSRTSSSSPSPSQMKSF.

The protein belongs to the DASH complex HSK3 family. In terms of assembly, component of the DASH complex consisting of ask1, dad1, dad2, dad3, dad4, dam1, duo1, dad5, spc19 and spc34, with a stoichiometry of one copy of each subunit per complex. Multiple DASH complexes oligomerize to form a ring that encircles spindle microtubules and organizes the rod-like NDC80 complexes of the outer kinetochore. DASH complex oligomerization strengthens microtubule attachments. On cytoplasmic microtubules, DASH complexes appear to form patches instead of rings.

The protein localises to the nucleus. The protein resides in the cytoplasm. It localises to the cytoskeleton. It is found in the spindle. Its subcellular location is the chromosome. The protein localises to the centromere. The protein resides in the kinetochore. Its function is as follows. Component of the DASH complex that connects microtubules with kinetochores and couples microtubule depolymerisation to chromosome movement; it is involved in retrieving kinetochores to the spindle poles before their re-orientation on the spindle in early mitosis and allows microtubule depolymerization to pull chromosomes apart and resist detachment during anaphase. Kinetochores, consisting of a centromere-associated inner segment and a microtubule-contacting outer segment, play a crucial role in chromosome segregation by mediating the physical connection between centromeric DNA and microtubules. Kinetochores also serve as an input point for the spindle assembly checkpoint, which delays anaphase until all chromosomes have bioriented on the mitotic spindle. The DASH complex mediates bipolar kinetochore-microtubule attachments and facilitates the formation of additional interactions between outer kinetochore components and spindle microtubules. During chromosome movement along the microtubule, it is required both for the sliding of kinetochores along the lateral side of the microtubule and also for microtubule end-on pulling on the kinetochore. Modulates cytoplasmic microtubule dynamics by tracking the plus-end of shortening microtubules and slowing their depolymerization. The chain is DASH complex subunit DAD5 from Schizosaccharomyces pombe (strain 972 / ATCC 24843) (Fission yeast).